Here is an 87-residue protein sequence, read N- to C-terminus: Small ribosomal subunit protein bS20 (87 aa).

The interval 1–26 (MANHKSAIKRHKQSQKRAARNRAAKT) is disordered.

It belongs to the bacterial ribosomal protein bS20 family.

Functionally, binds directly to 16S ribosomal RNA. In Nitratidesulfovibrio vulgaris (strain DSM 19637 / Miyazaki F) (Desulfovibrio vulgaris), this protein is Small ribosomal subunit protein bS20.